The sequence spans 1499 residues: DNA-directed RNA polymerase subunit beta' (1499 aa).

Zn(2+) contacts are provided by C67, C69, C82, and C85. Mg(2+) contacts are provided by D497, D499, and D501. Positions 865, 940, 947, and 950 each coordinate Zn(2+). The tract at residues 1475–1499 (YEPSQRAYQEDEYAKKEDGEIAIDD) is disordered. Basic and acidic residues predominate over residues 1482–1493 (YQEDEYAKKEDG).

This sequence belongs to the RNA polymerase beta' chain family. As to quaternary structure, the RNAP catalytic core consists of 2 alpha, 1 beta, 1 beta' and 1 omega subunit. When a sigma factor is associated with the core the holoenzyme is formed, which can initiate transcription. Requires Mg(2+) as cofactor. Zn(2+) serves as cofactor.

It catalyses the reaction RNA(n) + a ribonucleoside 5'-triphosphate = RNA(n+1) + diphosphate. In terms of biological role, DNA-dependent RNA polymerase catalyzes the transcription of DNA into RNA using the four ribonucleoside triphosphates as substrates. The chain is DNA-directed RNA polymerase subunit beta' from Chloroherpeton thalassium (strain ATCC 35110 / GB-78).